A 131-amino-acid chain; its full sequence is Small ribosomal subunit protein bS6 (131 aa).

The segment at 97–131 (TEASPMAKARDERDSRRGPAGERSYDEAHAEEIAE) is disordered. A compositionally biased stretch (basic and acidic residues) spans 104–131 (KARDERDSRRGPAGERSYDEAHAEEIAE).

The protein belongs to the bacterial ribosomal protein bS6 family.

Functionally, binds together with bS18 to 16S ribosomal RNA. This is Small ribosomal subunit protein bS6 from Shewanella baltica (strain OS223).